The following is a 147-amino-acid chain: Chorion class B protein B.L1 (147 aa).

The left arm stretch occupies residues 1–38; it reads IGCGRGCGGRGYGGLGYGGLGYGGLGYGGLGGGCGRGF. A run of 4 repeats spans residues 11–15, 16–20, 21–25, and 26–30. Positions 11 to 30 are 4 X 5 AA tandem repeats of G-Y-G-G-L; it reads GYGGLGYGGLGYGGLGYGGL. The tract at residues 39-107 is central domain; it reads SGGGLPVATA…GNGAVGITRE (69 aa). The interval 108–147 is right arm (Gly-rich tandem repeats); sequence GGLGYGAGYGGGYGLGYGGYGGGYGLGYGGYGGCGCGCGY.

This sequence belongs to the chorion protein family.

In terms of biological role, this protein is one of many from the eggshell of the silk moth. This Bombyx mori (Silk moth) protein is Chorion class B protein B.L1.